The chain runs to 192 residues: Large ribosomal subunit protein uL18 (192 aa).

The protein belongs to the universal ribosomal protein uL18 family. Part of the 50S ribosomal subunit. Contacts the 5S and 23S rRNAs.

Functionally, this is one of the proteins that bind and probably mediate the attachment of the 5S RNA into the large ribosomal subunit, where it forms part of the central protuberance. The protein is Large ribosomal subunit protein uL18 of Methanothermobacter thermautotrophicus (strain ATCC 29096 / DSM 1053 / JCM 10044 / NBRC 100330 / Delta H) (Methanobacterium thermoautotrophicum).